The sequence spans 314 residues: ATP synthase gamma chain (314 aa).

It belongs to the ATPase gamma chain family. F-type ATPases have 2 components, CF(1) - the catalytic core - and CF(0) - the membrane proton channel. CF(1) has five subunits: alpha(3), beta(3), gamma(1), delta(1), epsilon(1). CF(0) has three main subunits: a, b and c.

It localises to the cellular thylakoid membrane. In terms of biological role, produces ATP from ADP in the presence of a proton gradient across the membrane. The gamma chain is believed to be important in regulating ATPase activity and the flow of protons through the CF(0) complex. In Picosynechococcus sp. (strain ATCC 27264 / PCC 7002 / PR-6) (Agmenellum quadruplicatum), this protein is ATP synthase gamma chain.